The chain runs to 373 residues: Aromatic amino acid aminotransferase (373 aa).

Lys-212 is subject to N6-(pyridoxal phosphate)lysine.

It belongs to the class-II pyridoxal-phosphate-dependent aminotransferase family. Homodimer. The cofactor is pyridoxal 5'-phosphate.

It catalyses the reaction an aromatic L-alpha-amino acid + 2-oxoglutarate = an aromatic oxo-acid + L-glutamate. In terms of biological role, aminotransferase that catalyzes the conversion of aromatic amino acids and 2-oxoglutarate into corresponding aromatic oxo acids and L-glutamate. The protein is Aromatic amino acid aminotransferase of Corynebacterium jeikeium (strain K411).